We begin with the raw amino-acid sequence, 423 residues long: MTVDLLLGLQWGDEGKGKIVDVLTSKYDIIARFQGGPNAGHTLEFDGIKHVLRTIPSGIFHKNNINIIGNGVVIDPVVFKTEVDGLAKFNLDLKSKLIISRKAHLILPTHRLLDAASEASKGKAKIGSTLKGIGPTYMDKTGRNGIRVGDIELVDFKEKYRALANKHEEMIKFYDVSIQYNLAELEKEFFEAIEDLKKLDFIDSEEYLHQAQKAGKSILCEGAQGSLLDVDFGTYPFVTSSNTTAAGACTGLGIAPNKIKEVYGIFKAYTTRVGSGPFPTEDFEDAGTTMAKVGNEFGSVTGRQRRCGWLDLVALKYAVQINGVTQLMMMKGDVLSGFETLKVCTSYKYKGQEIAHLPYNIEPENIEPVYTEFKGWKADLTGMSSYDELPKELKDYIDFIEKEVEVPIKIVSVGPDRKQTITK.

GTP-binding positions include 12-18 (GDEGKGK) and 40-42 (GHT). Asp-13 (proton acceptor) is an active-site residue. Residues Asp-13 and Gly-40 each contribute to the Mg(2+) site. IMP-binding positions include 13-16 (DEGK), 38-41 (NAGH), Thr-129, Arg-143, Gln-224, Thr-239, and Arg-303. Residue His-41 is the Proton donor of the active site. Substrate is bound at residue 299-305 (SVTGRQR). GTP-binding positions include Arg-305, 331–333 (KGD), and 412–414 (SVG).

This sequence belongs to the adenylosuccinate synthetase family. In terms of assembly, homodimer. Mg(2+) serves as cofactor.

The protein localises to the cytoplasm. The enzyme catalyses IMP + L-aspartate + GTP = N(6)-(1,2-dicarboxyethyl)-AMP + GDP + phosphate + 2 H(+). It participates in purine metabolism; AMP biosynthesis via de novo pathway; AMP from IMP: step 1/2. In terms of biological role, plays an important role in the de novo pathway of purine nucleotide biosynthesis. Catalyzes the first committed step in the biosynthesis of AMP from IMP. The protein is Adenylosuccinate synthetase of Flavobacterium psychrophilum (strain ATCC 49511 / DSM 21280 / CIP 103535 / JIP02/86).